A 229-amino-acid polypeptide reads, in one-letter code: Flagellar L-ring protein (229 aa).

The signal sequence occupies residues 1 to 25 (MKQVRLLPPAPVRAVCALAVAALAG). The N-palmitoyl cysteine moiety is linked to residue Cys26. The S-diacylglycerol cysteine moiety is linked to residue Cys26.

This sequence belongs to the FlgH family. As to quaternary structure, the basal body constitutes a major portion of the flagellar organelle and consists of four rings (L,P,S, and M) mounted on a central rod.

It is found in the cell outer membrane. The protein resides in the bacterial flagellum basal body. In terms of biological role, assembles around the rod to form the L-ring and probably protects the motor/basal body from shearing forces during rotation. This is Flagellar L-ring protein from Burkholderia ambifaria (strain ATCC BAA-244 / DSM 16087 / CCUG 44356 / LMG 19182 / AMMD) (Burkholderia cepacia (strain AMMD)).